Consider the following 452-residue polypeptide: tRNA-2-methylthio-N(6)-dimethylallyladenosine synthase (452 aa).

Residues 5 to 121 (RRYHITTFGC…LADLLAQVEA (117 aa)) enclose the MTTase N-terminal domain. [4Fe-4S] cluster contacts are provided by cysteine 14, cysteine 50, cysteine 84, cysteine 156, cysteine 160, and cysteine 163. The 238-residue stretch at 142–379 (RDSTITAWVN…NHLVAQMAAD (238 aa)) folds into the Radical SAM core domain. Positions 382 to 446 (QRYLGRTEEV…AFSLTGQILS (65 aa)) constitute a TRAM domain.

Belongs to the methylthiotransferase family. MiaB subfamily. As to quaternary structure, monomer. [4Fe-4S] cluster serves as cofactor.

It is found in the cytoplasm. It carries out the reaction N(6)-dimethylallyladenosine(37) in tRNA + (sulfur carrier)-SH + AH2 + 2 S-adenosyl-L-methionine = 2-methylsulfanyl-N(6)-dimethylallyladenosine(37) in tRNA + (sulfur carrier)-H + 5'-deoxyadenosine + L-methionine + A + S-adenosyl-L-homocysteine + 2 H(+). Its function is as follows. Catalyzes the methylthiolation of N6-(dimethylallyl)adenosine (i(6)A), leading to the formation of 2-methylthio-N6-(dimethylallyl)adenosine (ms(2)i(6)A) at position 37 in tRNAs that read codons beginning with uridine. The polypeptide is tRNA-2-methylthio-N(6)-dimethylallyladenosine synthase (Synechococcus elongatus (strain ATCC 33912 / PCC 7942 / FACHB-805) (Anacystis nidulans R2)).